The primary structure comprises 417 residues: Serine hydroxymethyltransferase (417 aa).

(6S)-5,6,7,8-tetrahydrofolate contacts are provided by residues L121 and 125–127; that span reads GHL. N6-(pyridoxal phosphate)lysine is present on K229. 355 to 357 is a (6S)-5,6,7,8-tetrahydrofolate binding site; sequence SPF.

The protein belongs to the SHMT family. As to quaternary structure, homodimer. Pyridoxal 5'-phosphate is required as a cofactor.

The protein resides in the cytoplasm. It carries out the reaction (6R)-5,10-methylene-5,6,7,8-tetrahydrofolate + glycine + H2O = (6S)-5,6,7,8-tetrahydrofolate + L-serine. It functions in the pathway one-carbon metabolism; tetrahydrofolate interconversion. It participates in amino-acid biosynthesis; glycine biosynthesis; glycine from L-serine: step 1/1. In terms of biological role, catalyzes the reversible interconversion of serine and glycine with tetrahydrofolate (THF) serving as the one-carbon carrier. This reaction serves as the major source of one-carbon groups required for the biosynthesis of purines, thymidylate, methionine, and other important biomolecules. Also exhibits THF-independent aldolase activity toward beta-hydroxyamino acids, producing glycine and aldehydes, via a retro-aldol mechanism. The sequence is that of Serine hydroxymethyltransferase from Shewanella oneidensis (strain ATCC 700550 / JCM 31522 / CIP 106686 / LMG 19005 / NCIMB 14063 / MR-1).